Here is a 792-residue protein sequence, read N- to C-terminus: Xaa-Pro dipeptidyl-peptidase (792 aa).

Active-site charge relay system residues include serine 363, aspartate 482, and histidine 513.

The protein belongs to the peptidase S15 family. As to quaternary structure, homodimer.

The protein resides in the cytoplasm. The catalysed reaction is Hydrolyzes Xaa-Pro-|- bonds to release unblocked, N-terminal dipeptides from substrates including Ala-Pro-|-p-nitroanilide and (sequentially) Tyr-Pro-|-Phe-Pro-|-Gly-Pro-|-Ile.. Removes N-terminal dipeptides sequentially from polypeptides having unsubstituted N-termini provided that the penultimate residue is proline. The sequence is that of Xaa-Pro dipeptidyl-peptidase from Lactobacillus delbrueckii subsp. bulgaricus (strain ATCC BAA-365 / Lb-18).